A 330-amino-acid chain; its full sequence is GTP 3',8-cyclase (330 aa).

Positions 14–225 (RFGRTVDYVR…RERLADAYPE (212 aa)) constitute a Radical SAM core domain. Position 23 (arginine 23) interacts with GTP. Residues cysteine 30 and cysteine 34 each coordinate [4Fe-4S] cluster. Tyrosine 36 contributes to the S-adenosyl-L-methionine binding site. Cysteine 37 provides a ligand contact to [4Fe-4S] cluster. Arginine 70 lines the GTP pocket. Glycine 74 contacts S-adenosyl-L-methionine. Residue threonine 101 participates in GTP binding. Serine 125 lines the S-adenosyl-L-methionine pocket. Lysine 162 contacts GTP. 2 residues coordinate [4Fe-4S] cluster: cysteine 259 and cysteine 262. 264 to 266 (KLR) is a GTP binding site. Cysteine 276 is a binding site for [4Fe-4S] cluster. A compositionally biased stretch (basic and acidic residues) spans 309-318 (KPKDGLKSSH). The tract at residues 309–330 (KPKDGLKSSHDTAASSMSQIGG) is disordered. The span at 319–330 (DTAASSMSQIGG) shows a compositional bias: polar residues.

The protein belongs to the radical SAM superfamily. MoaA family. As to quaternary structure, monomer and homodimer. It depends on [4Fe-4S] cluster as a cofactor.

The catalysed reaction is GTP + AH2 + S-adenosyl-L-methionine = (8S)-3',8-cyclo-7,8-dihydroguanosine 5'-triphosphate + 5'-deoxyadenosine + L-methionine + A + H(+). Its pathway is cofactor biosynthesis; molybdopterin biosynthesis. Catalyzes the cyclization of GTP to (8S)-3',8-cyclo-7,8-dihydroguanosine 5'-triphosphate. The polypeptide is GTP 3',8-cyclase (Chlorobaculum tepidum (strain ATCC 49652 / DSM 12025 / NBRC 103806 / TLS) (Chlorobium tepidum)).